We begin with the raw amino-acid sequence, 237 residues long: Ribonuclease PH (237 aa).

Residues R86 and G124–R126 contribute to the phosphate site.

Belongs to the RNase PH family. Homohexameric ring arranged as a trimer of dimers.

The catalysed reaction is tRNA(n+1) + phosphate = tRNA(n) + a ribonucleoside 5'-diphosphate. In terms of biological role, phosphorolytic 3'-5' exoribonuclease that plays an important role in tRNA 3'-end maturation. Removes nucleotide residues following the 3'-CCA terminus of tRNAs; can also add nucleotides to the ends of RNA molecules by using nucleoside diphosphates as substrates, but this may not be physiologically important. Probably plays a role in initiation of 16S rRNA degradation (leading to ribosome degradation) during starvation. The chain is Ribonuclease PH from Nitrobacter hamburgensis (strain DSM 10229 / NCIMB 13809 / X14).